Consider the following 896-residue polypeptide: Translation initiation factor IF-2 (896 aa).

2 stretches are compositionally biased toward basic and acidic residues: residues 94–159 (KRDP…KDKV) and 166–219 (DMTK…EKNW). A disordered region spans residues 94–307 (KRDPQEAERL…GSALQQGFQK (214 aa)). The span at 256–271 (GRGRNAKAARPAKKGN) shows a compositional bias: basic residues. A compositionally biased stretch (basic and acidic residues) spans 272–285 (KHAESKADREEARA). In terms of domain architecture, tr-type G spans 395–564 (PRAPVVTIMG…LLQAEVLELK (170 aa)). The G1 stretch occupies residues 404 to 411 (GHVDHGKT). 404–411 (GHVDHGKT) contributes to the GTP binding site. The G2 stretch occupies residues 429 to 433 (GITQH). Residues 450–453 (DTPG) are G3. Residues 450 to 454 (DTPGH) and 504 to 507 (NKID) contribute to the GTP site. The interval 504–507 (NKID) is G4. A G5 region spans residues 540-542 (SAK).

Belongs to the TRAFAC class translation factor GTPase superfamily. Classic translation factor GTPase family. IF-2 subfamily.

The protein resides in the cytoplasm. One of the essential components for the initiation of protein synthesis. Protects formylmethionyl-tRNA from spontaneous hydrolysis and promotes its binding to the 30S ribosomal subunits. Also involved in the hydrolysis of GTP during the formation of the 70S ribosomal complex. In Klebsiella oxytoca, this protein is Translation initiation factor IF-2 (infB).